Here is a 375-residue protein sequence, read N- to C-terminus: Growth/differentiation factor 8 (375 aa).

The N-terminal stretch at 1 to 18 (MQKLQISVYIYLFMLIVA) is a signal peptide. Residues 19–266 (GPVDLNENSE…VTDTPKRSRR (248 aa)) constitute a propeptide that is removed on maturation. Residues Asn47 and Asn71 are each glycosylated (N-linked (GlcNAc...) asparagine). 4 disulfide bridges follow: Cys272–Cys282, Cys281–Cys340, Cys309–Cys372, and Cys313–Cys374.

The protein belongs to the TGF-beta family. Homodimer; disulfide-linked. Interacts with WFIKKN2, leading to inhibit its activity. Interacts with FSTL3. In terms of processing, synthesized as large precursor molecule that undergoes proteolytic cleavage to generate an N-terminal propeptide and a disulfide linked C-terminal dimer, which is the biologically active molecule. The circulating form consists of a latent complex of the C-terminal dimer and other proteins, including its propeptide, which maintain the C-terminal dimer in a latent, inactive state. Ligand activation requires additional cleavage of the prodomain by a tolloid-like metalloproteinase.

Its subcellular location is the secreted. Acts specifically as a negative regulator of skeletal muscle growth. The polypeptide is Growth/differentiation factor 8 (MSTN) (Bos gaurus (Seladang)).